We begin with the raw amino-acid sequence, 161 residues long: Thy-1 membrane glycoprotein (161 aa).

An N-terminal signal peptide occupies residues 1–19 (MNPVISITLLLSVLQMSRG). Gln-20 bears the Pyrrolidone carboxylic acid mark. The 107-residue stretch at 20–126 (QRVISLTACL…NKTINVIRDK (107 aa)) folds into the Ig-like V-type domain. Intrachain disulfides connect Cys-28-Cys-130 and Cys-38-Cys-104. An N-linked (GlcNAc...) (complex) asparagine; alternate glycan is attached at Asn-42. The N-linked (GlcNAc...) (high mannose) asparagine; alternate glycan is linked to Asn-42. Residue Asn-42 is glycosylated (N-linked (GlcNAc...) asparagine; alternate). At Ser-82 the chain carries Phosphoserine. Residue Asn-93 is glycosylated (N-linked (GlcNAc...) (complex) asparagine; alternate). N-linked (GlcNAc...) asparagine; alternate glycosylation is present at Asn-93. Asn-117 is a glycosylation site (N-linked (GlcNAc...) (high mannose) asparagine; in brain; alternate). Asn-117 carries an N-linked (GlcNAc...) (hybrid) asparagine; in brain; alternate glycan. Cys-130 is lipidated: GPI-anchor amidated cysteine. Positions 131–161 (GGISLLVQNTSWLLLLLLSLSFLQATDFISL) are cleaved as a propeptide — removed in mature form.

Glycosylation is tissue specific. Sialylation of N-glycans at Asn-93 in brain and at Asn-42, Asn-93 and Asn-117 in thymus. As to expression, abundant in lymphoid tissues.

The protein resides in the cell membrane. Functionally, may play a role in cell-cell or cell-ligand interactions during synaptogenesis and other events in the brain. The polypeptide is Thy-1 membrane glycoprotein (Thy1) (Rattus norvegicus (Rat)).